Consider the following 510-residue polypeptide: Maturase K (510 aa).

The protein belongs to the intron maturase 2 family. MatK subfamily.

The protein localises to the plastid. It is found in the chloroplast. In terms of biological role, usually encoded in the trnK tRNA gene intron. Probably assists in splicing its own and other chloroplast group II introns. The protein is Maturase K of Populus alba (White poplar).